Here is a 252-residue protein sequence, read N- to C-terminus: 5'-nucleotidase SurE (252 aa).

Residues Asp-8, Asp-9, Ser-39, and Asn-91 each contribute to the a divalent metal cation site.

Belongs to the SurE nucleotidase family. A divalent metal cation serves as cofactor.

It localises to the cytoplasm. The catalysed reaction is a ribonucleoside 5'-phosphate + H2O = a ribonucleoside + phosphate. Its function is as follows. Nucleotidase that shows phosphatase activity on nucleoside 5'-monophosphates. The sequence is that of 5'-nucleotidase SurE from Paraburkholderia xenovorans (strain LB400).